The sequence spans 458 residues: Phosphoglucosamine mutase (458 aa).

Residue serine 108 is the Phosphoserine intermediate of the active site. The Mg(2+) site is built by serine 108, aspartate 247, aspartate 249, and aspartate 251. Serine 108 bears the Phosphoserine mark.

The protein belongs to the phosphohexose mutase family. Mg(2+) serves as cofactor. In terms of processing, activated by phosphorylation.

It carries out the reaction alpha-D-glucosamine 1-phosphate = D-glucosamine 6-phosphate. Functionally, catalyzes the conversion of glucosamine-6-phosphate to glucosamine-1-phosphate. The chain is Phosphoglucosamine mutase from Nitrosomonas eutropha (strain DSM 101675 / C91 / Nm57).